Here is a 326-residue protein sequence, read N- to C-terminus: Tetraacyldisaccharide 4'-kinase (326 aa).

An ATP-binding site is contributed by Ser-53–Thr-60.

The protein belongs to the LpxK family.

It catalyses the reaction a lipid A disaccharide + ATP = a lipid IVA + ADP + H(+). It functions in the pathway glycolipid biosynthesis; lipid IV(A) biosynthesis; lipid IV(A) from (3R)-3-hydroxytetradecanoyl-[acyl-carrier-protein] and UDP-N-acetyl-alpha-D-glucosamine: step 6/6. Its function is as follows. Transfers the gamma-phosphate of ATP to the 4'-position of a tetraacyldisaccharide 1-phosphate intermediate (termed DS-1-P) to form tetraacyldisaccharide 1,4'-bis-phosphate (lipid IVA). This chain is Tetraacyldisaccharide 4'-kinase, found in Actinobacillus pleuropneumoniae serotype 7 (strain AP76).